Reading from the N-terminus, the 426-residue chain is Mannose-6-phosphate isomerase (426 aa).

Zn(2+) contacts are provided by Gln-112, His-114, Glu-139, and His-277. Arg-296 is a catalytic residue.

The protein belongs to the mannose-6-phosphate isomerase type 1 family. It depends on Zn(2+) as a cofactor.

The protein resides in the cytoplasm. The catalysed reaction is D-mannose 6-phosphate = D-fructose 6-phosphate. It functions in the pathway nucleotide-sugar biosynthesis; GDP-alpha-D-mannose biosynthesis; alpha-D-mannose 1-phosphate from D-fructose 6-phosphate: step 1/2. In terms of biological role, involved in the synthesis of the GDP-mannose and dolichol-phosphate-mannose required for a number of critical mannosyl transfer reactions. The sequence is that of Mannose-6-phosphate isomerase (PMI40) from Ogataea parapolymorpha (strain ATCC 26012 / BCRC 20466 / JCM 22074 / NRRL Y-7560 / DL-1) (Yeast).